We begin with the raw amino-acid sequence, 276 residues long: Odontogenic ameloblast-associated protein (276 aa).

An N-terminal signal peptide occupies residues 1 to 15; sequence MRTLILLGILGATMS. 3 O-linked (GalNAc...) threonine glycosylation sites follow: T101, T113, and T117. Residues 125–127 are interaction with ARHGEF5; the sequence is MPS. S246 is a glycosylation site (O-linked (GalNAc...) serine). 3 O-linked (GalNAc...) threonine glycosylation sites follow: T247, T248, and T252. S253 is a glycosylation site (O-linked (GalNAc...) serine). 4 O-linked (GalNAc...) threonine glycosylation sites follow: T254, T258, T260, and T270. S272 carries O-linked (GalNAc...) serine glycosylation.

This sequence belongs to the ODAM family. Interacts (via C-terminus) with ARHGEF5. Post-translationally, O-glycosylated.

Its subcellular location is the secreted. It is found in the cytoplasm. The protein localises to the nucleus. In terms of biological role, tooth-associated epithelia protein that probably plays a role in odontogenesis, the complex process that results in the initiation and generation of the tooth. May be incorporated in the enamel matrix at the end of mineralization process. Involved in the induction of RHOA activity via interaction with ARHGEF and expression of downstream factors such as ROCK. Plays a role in attachment of the junctional epithelium to the tooth surface. The chain is Odontogenic ameloblast-associated protein (ODAM) from Sus scrofa (Pig).